Reading from the N-terminus, the 585-residue chain is MGRIIRVTGPLVVADGMKGAKMYEVVRVGEIGLIGEIIRLEGDKAVIQVYEETAGIRPGEPVEGTGSSLSVELGPGLLTAMYDGIQRPLEVLRQLSGDFIARGLTAPALPRDKKWHFTPKVKVGDKVVGGDVLGVVPETSIIEHKILVPPWVEGEIVEIAEEGDYTVEEVIAKVKKPDGTIEELKMYHRWPVRVKRPYKQKLPPEVPLITGQRTIDTFFSQAKGGTAAIPGPFGSGKTVTQHQLAKWSDAQVVVYIGCGERGNEMTDVLEEFPKLKDPKTGKPLMERTVLIANTSNMPVAAREASIYTGITIAEYFRDQGYDVALMADSTSRWAEALREISGRLEEMPGEEGYPAYLASKIAEFYERAGRVITLGSDERVGSVSVIGAVSPPGGDFSEPVVQNTLRVVKVFWALDADLARRRHFPAINWLRSYSLYIDAIQDWWHKNVDPEWRKMRDTAMALLQKEAELQEIVRIVGPDALPDREKAILIVTRMLREDYLQQDAFDEVDTYCPPKKQVTMMRVILNFYEKTMQAVDRGVPVDEIAKLPVREKIGRMKFEPDVEKVRALIDETNQQFEELFKKYGA.

Position 231-238 (231-238) interacts with ATP; it reads GPFGSGKT.

This sequence belongs to the ATPase alpha/beta chains family. Has multiple subunits with at least A(3), B(3), C, D, E, F, H, I and proteolipid K(x).

The protein localises to the cell membrane. It carries out the reaction ATP + H2O + 4 H(+)(in) = ADP + phosphate + 5 H(+)(out). In terms of biological role, produces ATP from ADP in the presence of a proton gradient across the membrane. The archaeal alpha chain is a catalytic subunit. Its function is as follows. Component of the A-type ATP synthase that produces ATP from ADP in the presence of a proton gradient across the membrane. The A chain is the catalytic subunit. In Thermococcus kodakarensis (strain ATCC BAA-918 / JCM 12380 / KOD1) (Pyrococcus kodakaraensis (strain KOD1)), this protein is A-type ATP synthase subunit A.